The following is a 323-amino-acid chain: Methenyltetrahydromethanopterin cyclohydrolase (323 aa).

The protein belongs to the MCH family.

It is found in the cytoplasm. It catalyses the reaction 5,10-methenyl-5,6,7,8-tetrahydromethanopterin + H2O = N(5)-formyl-5,6,7,8-tetrahydromethanopterin + H(+). The protein operates within one-carbon metabolism; methanogenesis from CO(2); 5,10-methenyl-5,6,7,8-tetrahydromethanopterin from CO(2): step 3/3. Catalyzes the reversible interconversion of 5-formyl-H(4)MPT to methenyl-H(4)MPT(+). The sequence is that of Methenyltetrahydromethanopterin cyclohydrolase from Methanococcus vannielii (strain ATCC 35089 / DSM 1224 / JCM 13029 / OCM 148 / SB).